The following is a 316-amino-acid chain: MVVMPPQNSVNESEGRYLQDGFWQHGRFYGSWKPGKYLFPIDSEELNRLDIFHKVFLLARDNKPFLAPIRRPSPRIMDIGTGTGIWAINVAEECLSDAQIMAVDLNQIQPALIPPGFMPKQYDIEEPSWGPLLTDCDLIHMRMLLGSIQTDLWPQVYHNVFEHLTPGIGFFEHIEVDWIPRCDDDERPANSAFVKWAELFLDGMDRFNRSVRVTPQEHRQMLEAAGFTDIRQEVIKAYVCPWSADRNEREIARWFNIGLSHSLEAMSLKPLIEKLGFEAEEVRELCERAKRETCVLRYHTYCNIHVWTARKPGPQQ.

The protein belongs to the methyltransferase superfamily. LaeA methyltransferase family. Component of the heterotrimeric velvet complex composed of laeA, veA and velB; VeA acting as a bridging protein between laeA and velB.

It is found in the nucleus. It catalyses the reaction L-methionyl-[protein] + S-adenosyl-L-methionine = S-methyl-L-methionyl-[protein] + S-adenosyl-L-homocysteine. In terms of biological role, methyltransferase that performs automethylation. No other methyl-accepting substrate has been identified yet. Component of the velvet transcription factor complex that acts as a global regulator for secondary metabolite gene expression. Controls the biosynthetic gene cluster for beauvericin, a depsipeptide mycotoxin that functions as a virulence determinant. The velvet complex also regulates chromatin structure and transcription of siderophore biosynthetic genes and is required for infection of tomato plants. The velvet complex also governs expression of nitrate metabolism genes. This Fusarium oxysporum f. sp. lycopersici (strain 4287 / CBS 123668 / FGSC 9935 / NRRL 34936) (Fusarium vascular wilt of tomato) protein is Secondary metabolism regulator laeA.